A 201-amino-acid polypeptide reads, in one-letter code: dCTP deaminase, dUMP-forming (201 aa).

DCTP-binding positions include 101–106 (KSSLGR), aspartate 119, 127–129 (TLE), glutamine 148, tyrosine 162, and glutamine 174. Glutamate 129 acts as the Proton donor/acceptor in catalysis.

Belongs to the dCTP deaminase family. As to quaternary structure, homotrimer.

It catalyses the reaction dCTP + 2 H2O = dUMP + NH4(+) + diphosphate. The protein operates within pyrimidine metabolism; dUMP biosynthesis; dUMP from dCTP: step 1/1. Functionally, bifunctional enzyme that catalyzes both the deamination of dCTP to dUTP and the hydrolysis of dUTP to dUMP without releasing the toxic dUTP intermediate. This chain is dCTP deaminase, dUMP-forming, found in Parafrankia sp. (strain EAN1pec).